Consider the following 276-residue polypeptide: Rhamnulose-1-phosphate aldolase (276 aa).

E117 is a catalytic residue. Residues H141, H143, and H212 each coordinate Zn(2+).

It belongs to the aldolase class II family. RhaD subfamily. As to quaternary structure, homotetramer. It depends on Zn(2+) as a cofactor.

It localises to the cytoplasm. The catalysed reaction is L-rhamnulose 1-phosphate = (S)-lactaldehyde + dihydroxyacetone phosphate. It participates in carbohydrate degradation; L-rhamnose degradation; glycerone phosphate from L-rhamnose: step 3/3. Catalyzes the reversible cleavage of L-rhamnulose-1-phosphate to dihydroxyacetone phosphate (DHAP) and L-lactaldehyde. This Klebsiella pneumoniae (strain 342) protein is Rhamnulose-1-phosphate aldolase.